Consider the following 401-residue polypeptide: Imidazolonepropionase (401 aa).

Fe(3+) contacts are provided by H66 and H68. Zn(2+) is bound by residues H66 and H68. The 4-imidazolone-5-propanoate site is built by R75, Y138, and H171. Y138 contributes to the N-formimidoyl-L-glutamate binding site. H236 contacts Fe(3+). Residue H236 participates in Zn(2+) binding. Q239 is a 4-imidazolone-5-propanoate binding site. Residue D311 coordinates Fe(3+). D311 is a binding site for Zn(2+). Residues N313 and G315 each contribute to the N-formimidoyl-L-glutamate site. Position 316 (T316) interacts with 4-imidazolone-5-propanoate.

The protein belongs to the metallo-dependent hydrolases superfamily. HutI family. Zn(2+) is required as a cofactor. The cofactor is Fe(3+).

The protein localises to the cytoplasm. It carries out the reaction 4-imidazolone-5-propanoate + H2O = N-formimidoyl-L-glutamate. It participates in amino-acid degradation; L-histidine degradation into L-glutamate; N-formimidoyl-L-glutamate from L-histidine: step 3/3. Functionally, catalyzes the hydrolytic cleavage of the carbon-nitrogen bond in imidazolone-5-propanoate to yield N-formimidoyl-L-glutamate. It is the third step in the universal histidine degradation pathway. In Pseudomonas savastanoi pv. phaseolicola (strain 1448A / Race 6) (Pseudomonas syringae pv. phaseolicola (strain 1448A / Race 6)), this protein is Imidazolonepropionase.